The sequence spans 407 residues: Argininosuccinate synthase (407 aa).

ATP contacts are provided by residues 13-21 (AYSGGLDTS) and alanine 40. L-citrulline-binding residues include tyrosine 91 and serine 96. Glycine 121 is an ATP binding site. 3 residues coordinate L-aspartate: threonine 123, asparagine 127, and aspartate 128. Residue asparagine 127 participates in L-citrulline binding. Arginine 131, serine 182, serine 191, glutamate 267, and tyrosine 279 together coordinate L-citrulline.

It belongs to the argininosuccinate synthase family. Type 1 subfamily. In terms of assembly, homotetramer.

It localises to the cytoplasm. The enzyme catalyses L-citrulline + L-aspartate + ATP = 2-(N(omega)-L-arginino)succinate + AMP + diphosphate + H(+). It functions in the pathway amino-acid biosynthesis; L-arginine biosynthesis; L-arginine from L-ornithine and carbamoyl phosphate: step 2/3. The polypeptide is Argininosuccinate synthase (Mesorhizobium japonicum (strain LMG 29417 / CECT 9101 / MAFF 303099) (Mesorhizobium loti (strain MAFF 303099))).